A 46-amino-acid chain; its full sequence is Endochitinase 2 (46 aa).

Belongs to the glycosyl hydrolase 19 family. Chitinase class I subfamily.

The catalysed reaction is Random endo-hydrolysis of N-acetyl-beta-D-glucosaminide (1-&gt;4)-beta-linkages in chitin and chitodextrins.. In terms of biological role, defense against chitin-containing fungal and bacterial pathogens. The protein is Endochitinase 2 of Arachis hypogaea (Peanut).